Here is a 704-residue protein sequence, read N- to C-terminus: Polyribonucleotide nucleotidyltransferase (704 aa).

Mg(2+)-binding residues include Asp485 and Asp491. A KH domain is found at Pro552–Ile611. The S1 motif domain maps to Gly621–Lys689.

It belongs to the polyribonucleotide nucleotidyltransferase family. Requires Mg(2+) as cofactor.

It localises to the cytoplasm. The enzyme catalyses RNA(n+1) + phosphate = RNA(n) + a ribonucleoside 5'-diphosphate. In terms of biological role, involved in mRNA degradation. Catalyzes the phosphorolysis of single-stranded polyribonucleotides processively in the 3'- to 5'-direction. The chain is Polyribonucleotide nucleotidyltransferase from Halalkalibacterium halodurans (strain ATCC BAA-125 / DSM 18197 / FERM 7344 / JCM 9153 / C-125) (Bacillus halodurans).